The primary structure comprises 481 residues: Pentatricopeptide repeat-containing protein 8, mitochondrial (481 aa).

The N-terminal 55 residues, 1–55 (MQGFGSQIFRKLLRSSNAKVSDALLQNTRTLFTAPPLHSGLQTSFTAETQQHVRQ), are a transit peptide targeting the mitochondrion. PPR repeat units lie at residues 137–172 (SARF…EFLP) and 365–399 (SIST…GLKP).

Its subcellular location is the mitochondrion. Mitochondrial RNA-binding protein involved in mitochondrial translation. The cox1 mRNA is one target but it is not clear if ppr8 has a single or multiple targets. This is Pentatricopeptide repeat-containing protein 8, mitochondrial (ppr8) from Schizosaccharomyces pombe (strain 972 / ATCC 24843) (Fission yeast).